Consider the following 852-residue polypeptide: Kinesin-like protein KIF18B (852 aa).

The Kinesin motor domain occupies 7-351 (TLQVVVRVRP…LKYADRAKEI (345 aa)). 109-116 (GATGAGKT) serves as a coordination point for ATP. The stretch at 366–393 (ISQYATICQQLQAEVAALRKKLQVYEGG) forms a coiled coil. Disordered stretches follow at residues 390–424 (YEGG…PAGP) and 437–485 (QVER…RLTL). Phosphoserine is present on serine 404. Threonine 417 is modified (phosphothreonine). Residues 451–461 (QSPEDEDEGPA) are compositionally biased toward acidic residues. Serine 452, serine 480, and serine 558 each carry phosphoserine. Disordered regions lie at residues 575 to 594 (IPVP…PVTR) and 602 to 689 (GPLH…SPRV). Pro residues predominate over residues 577 to 588 (VPSPLCPEPPGY). The Nuclear localization signal motif lies at 624 to 632 (PMEKKRRRP). Serine 633 and serine 639 each carry phosphoserine. An MAPRE1-binding motif is present at residues 653–656 (SFLP). Serine 662 is subject to Phosphoserine. Over residues 664-673 (PDTQPSQGPS) the composition is skewed to polar residues. Threonine 674 is subject to Phosphothreonine. A KIF2C-binding region spans residues 711–736 (TPLALPTRDLNATFDLSEEPPSKPSF). Residues 767–798 (MKGPKPTSSLPGTSACKKKRVASSSVSHGRSR) are disordered. Short sequence motifs (MAPRE1-binding) lie at residues 774–777 (SSLP) and 800–803 (ARLP). Serine 822 carries the phosphoserine modification.

Belongs to the TRAFAC class myosin-kinesin ATPase superfamily. Kinesin family. As to quaternary structure, interacts with MAPRE1; this interaction is required for efficient accumulation at microtubule plus ends. Interacts with KIF2C at microtubule tips; this interaction increases the affinity of both partners for microtubule plus ends and is required for robust microtubule depolymerization. KIF2C phosphorylation by AURKA or AURKB strongly reduces KIF18B-binding. In terms of tissue distribution, shows a prominent expression in the amygdala.

Its subcellular location is the nucleus. The protein localises to the cytoplasm. It is found in the cytoskeleton. In terms of biological role, in complex with KIF2C, constitutes the major microtubule plus-end depolymerizing activity in mitotic cells. Its major role may be to transport KIF2C and/or MAPRE1 along microtubules. This chain is Kinesin-like protein KIF18B (KIF18B), found in Homo sapiens (Human).